Reading from the N-terminus, the 193-residue chain is Peptidyl-tRNA hydrolase (193 aa).

Residue tyrosine 14 participates in tRNA binding. The Proton acceptor role is filled by histidine 19. Positions 64, 66, and 112 each coordinate tRNA.

The protein belongs to the PTH family. In terms of assembly, monomer.

The protein resides in the cytoplasm. The catalysed reaction is an N-acyl-L-alpha-aminoacyl-tRNA + H2O = an N-acyl-L-amino acid + a tRNA + H(+). Its function is as follows. Hydrolyzes ribosome-free peptidyl-tRNAs (with 1 or more amino acids incorporated), which drop off the ribosome during protein synthesis, or as a result of ribosome stalling. In terms of biological role, catalyzes the release of premature peptidyl moieties from peptidyl-tRNA molecules trapped in stalled 50S ribosomal subunits, and thus maintains levels of free tRNAs and 50S ribosomes. In Bartonella henselae (strain ATCC 49882 / DSM 28221 / CCUG 30454 / Houston 1) (Rochalimaea henselae), this protein is Peptidyl-tRNA hydrolase.